The primary structure comprises 443 residues: UDP-N-acetylmuramate--L-alanine ligase (443 aa).

Residue 110–116 coordinates ATP; it reads GAHGKTS.

The protein belongs to the MurCDEF family.

Its subcellular location is the cytoplasm. The enzyme catalyses UDP-N-acetyl-alpha-D-muramate + L-alanine + ATP = UDP-N-acetyl-alpha-D-muramoyl-L-alanine + ADP + phosphate + H(+). The protein operates within cell wall biogenesis; peptidoglycan biosynthesis. Its function is as follows. Cell wall formation. The chain is UDP-N-acetylmuramate--L-alanine ligase from Streptococcus agalactiae serotype III (strain NEM316).